The primary structure comprises 801 residues: Phenylalanine--tRNA ligase beta subunit (801 aa).

The tRNA-binding domain occupies 39–152 (ARAFSGVVVG…TDAPIGTDIR (114 aa)). The B5 domain maps to 407–482 (PARAPITLPI…RIYGYDNIPS (76 aa)). Asp-460, Asp-466, Glu-469, and Glu-470 together coordinate Mg(2+). Residues 706 to 799 (SKFPQVRRDI…LTVEHSAQLR (94 aa)) enclose the FDX-ACB domain.

The protein belongs to the phenylalanyl-tRNA synthetase beta subunit family. Type 1 subfamily. Tetramer of two alpha and two beta subunits. It depends on Mg(2+) as a cofactor.

Its subcellular location is the cytoplasm. The enzyme catalyses tRNA(Phe) + L-phenylalanine + ATP = L-phenylalanyl-tRNA(Phe) + AMP + diphosphate + H(+). In Psychrobacter arcticus (strain DSM 17307 / VKM B-2377 / 273-4), this protein is Phenylalanine--tRNA ligase beta subunit.